We begin with the raw amino-acid sequence, 189 residues long: Phosphomevalonate kinase (189 aa).

Residues 10-16 (KRKCGKD) and R138 each bind ATP. Position 168 (N168) interacts with substrate.

The protein localises to the cytoplasm. It is found in the cytosol. The catalysed reaction is (R)-5-phosphomevalonate + ATP = (R)-5-diphosphomevalonate + ADP. It functions in the pathway isoprenoid biosynthesis; isopentenyl diphosphate biosynthesis via mevalonate pathway; isopentenyl diphosphate from (R)-mevalonate: step 2/3. The protein is Phosphomevalonate kinase of Drosophila melanogaster (Fruit fly).